Consider the following 198-residue polypeptide: ATP-dependent Clp protease proteolytic subunit (198 aa).

Catalysis depends on S98, which acts as the Nucleophile. H123 is an active-site residue.

Belongs to the peptidase S14 family. Fourteen ClpP subunits assemble into 2 heptameric rings which stack back to back to give a disk-like structure with a central cavity, resembling the structure of eukaryotic proteasomes.

The protein localises to the cytoplasm. It carries out the reaction Hydrolysis of proteins to small peptides in the presence of ATP and magnesium. alpha-casein is the usual test substrate. In the absence of ATP, only oligopeptides shorter than five residues are hydrolyzed (such as succinyl-Leu-Tyr-|-NHMec, and Leu-Tyr-Leu-|-Tyr-Trp, in which cleavage of the -Tyr-|-Leu- and -Tyr-|-Trp bonds also occurs).. Functionally, cleaves peptides in various proteins in a process that requires ATP hydrolysis. Has a chymotrypsin-like activity. Plays a major role in the degradation of misfolded proteins. This Halothermothrix orenii (strain H 168 / OCM 544 / DSM 9562) protein is ATP-dependent Clp protease proteolytic subunit.